Here is an 83-residue protein sequence, read N- to C-terminus: Small ribosomal subunit protein bS16 (83 aa).

This sequence belongs to the bacterial ribosomal protein bS16 family.

The chain is Small ribosomal subunit protein bS16 from Shewanella putrefaciens (strain CN-32 / ATCC BAA-453).